The primary structure comprises 335 residues: Proline racemase (335 aa).

Catalysis depends on cysteine 91, which acts as the Proton acceptor. The Proton donor role is filled by cysteine 255.

The protein belongs to the proline racemase family. As to quaternary structure, homodimer.

The catalysed reaction is L-proline = D-proline. Catalyzes the reversible interconversion of L- and D-proline. Plays an important role in the regulation of intra- and extracellular amino acid pools, allowing the bacterium to profit from host precursors and enzymatic pathways. Strong B-cell mitogen. In Clostridioides difficile (strain 630) (Peptoclostridium difficile), this protein is Proline racemase.